The primary structure comprises 367 residues: Cobalt-precorrin-5B C(1)-methyltransferase (367 aa).

This sequence belongs to the CbiD family.

It catalyses the reaction Co-precorrin-5B + S-adenosyl-L-methionine = Co-precorrin-6A + S-adenosyl-L-homocysteine. Its pathway is cofactor biosynthesis; adenosylcobalamin biosynthesis; cob(II)yrinate a,c-diamide from sirohydrochlorin (anaerobic route): step 6/10. Functionally, catalyzes the methylation of C-1 in cobalt-precorrin-5B to form cobalt-precorrin-6A. This is Cobalt-precorrin-5B C(1)-methyltransferase from Leptospira interrogans serogroup Icterohaemorrhagiae serovar Lai (strain 56601).